The primary structure comprises 177 residues: Large ribosomal subunit protein uL6 (177 aa).

It belongs to the universal ribosomal protein uL6 family. In terms of assembly, part of the 50S ribosomal subunit.

This protein binds to the 23S rRNA, and is important in its secondary structure. It is located near the subunit interface in the base of the L7/L12 stalk, and near the tRNA binding site of the peptidyltransferase center. The polypeptide is Large ribosomal subunit protein uL6 (Alteromonas mediterranea (strain DSM 17117 / CIP 110805 / LMG 28347 / Deep ecotype)).